Consider the following 506-residue polypeptide: Maturase K (506 aa).

Belongs to the intron maturase 2 family. MatK subfamily.

It is found in the plastid. Its subcellular location is the chloroplast. Usually encoded in the trnK tRNA gene intron. Probably assists in splicing its own and other chloroplast group II introns. This chain is Maturase K, found in Trifolium striatum (Knotted clover).